We begin with the raw amino-acid sequence, 101 residues long: Thylakoid-associated protein slr0729 (101 aa).

The protein localises to the cellular thylakoid membrane. The protein is Thylakoid-associated protein slr0729 of Synechocystis sp. (strain ATCC 27184 / PCC 6803 / Kazusa).